A 171-amino-acid polypeptide reads, in one-letter code: Protein BTG1 (171 aa).

Ser159 is modified (phosphoserine).

This sequence belongs to the BTG family. In terms of assembly, interacts with CNOT7 and CNOT8.

In terms of biological role, anti-proliferative protein. The sequence is that of Protein BTG1 (Btg1) from Rattus norvegicus (Rat).